A 134-amino-acid chain; its full sequence is Large ribosomal subunit protein bL20 (134 aa).

Belongs to the bacterial ribosomal protein bL20 family.

Functionally, binds directly to 23S ribosomal RNA and is necessary for the in vitro assembly process of the 50S ribosomal subunit. It is not involved in the protein synthesizing functions of that subunit. In Brucella anthropi (strain ATCC 49188 / DSM 6882 / CCUG 24695 / JCM 21032 / LMG 3331 / NBRC 15819 / NCTC 12168 / Alc 37) (Ochrobactrum anthropi), this protein is Large ribosomal subunit protein bL20.